The following is a 308-amino-acid chain: MLNKPSGISSNRALQISKRLLSAAKAGHTGTLDPMAQGLLPICLGEATKFSSTLLGVDKTYIASLRLGYISNTGDAEGEIRQVVGSDVNPPDFGQVTGILQTFLGRSSQIPPMFSALKQHGKPLYRYAREGITVERKAREIVIHAASLDTLSGFEMTITVRCSSGTYVRTLAEDIGKALGYGGAYLTALSRISVGHFELSQACDLDQLESETPVNRQKLLCPIDSLLNDIPSIVLDDDEALRLRQGQKIRKNMSRYGLPVNTQLKLYDDRNVFLGLGERIDPEVIVPRRMISLHEVVTGAIAGSVDLQ.

Catalysis depends on Asp33, which acts as the Nucleophile.

This sequence belongs to the pseudouridine synthase TruB family. Type 1 subfamily.

The enzyme catalyses uridine(55) in tRNA = pseudouridine(55) in tRNA. Its function is as follows. Responsible for synthesis of pseudouridine from uracil-55 in the psi GC loop of transfer RNAs. The sequence is that of tRNA pseudouridine synthase B from Nitrosomonas europaea (strain ATCC 19718 / CIP 103999 / KCTC 2705 / NBRC 14298).